The sequence spans 178 residues: Ribonuclease M5 (178 aa).

In terms of domain architecture, Toprim spans 10–94; that stretch reads DGVIVCEGKT…YVDMNARLKN (85 aa). Mg(2+) is bound by residues E16, D62, and D64.

The protein belongs to the ribonuclease M5 family. It depends on Mg(2+) as a cofactor.

The protein localises to the cytoplasm. The enzyme catalyses Endonucleolytic cleavage of RNA, removing 21 and 42 nucleotides, respectively, from the 5'- and 3'-termini of a 5S-rRNA precursor.. Functionally, required for correct processing of both the 5' and 3' ends of 5S rRNA precursor. Cleaves both sides of a double-stranded region yielding mature 5S rRNA in one step. The protein is Ribonuclease M5 (rnmV) of Mycoplasma genitalium (strain ATCC 33530 / DSM 19775 / NCTC 10195 / G37) (Mycoplasmoides genitalium).